Consider the following 81-residue polypeptide: uncharacterized protein (81 aa).

A signal peptide spans 1–24; it reads MRKILKIVSLLILLLLLVYSFFSP. At 25–28 the chain is on the extracellular side; it reads NSQL. The chain crosses the membrane as a helical span at residues 29–49; that stretch reads FVFVQLIIIAFLIGFGINCFV. Residues 50 to 81 are Cytoplasmic-facing; sequence KKERYQGTLYFVIAICNITINLDKINELIQSI.

It localises to the cell membrane. This is an uncharacterized protein from Bacillus subtilis (strain 168).